The following is a 183-amino-acid chain: Ribosome rescue factor SmrB (183 aa).

In terms of domain architecture, Smr spans 98-173 (LDLHGLTQLQ…GDAALLVLIE (76 aa)).

It belongs to the SmrB family. As to quaternary structure, associates with collided ribosomes, but not with correctly translating polysomes.

Acts as a ribosome collision sensor. Detects stalled/collided disomes (pairs of ribosomes where the leading ribosome is stalled and a second ribosome has collided with it) and endonucleolytically cleaves mRNA at the 5' boundary of the stalled ribosome. Stalled/collided disomes form a new interface (primarily via the 30S subunits) that binds SmrB. Cleaved mRNA becomes available for tmRNA ligation, leading to ribosomal subunit dissociation and rescue of stalled ribosomes. This chain is Ribosome rescue factor SmrB, found in Shigella dysenteriae serotype 1 (strain Sd197).